Reading from the N-terminus, the 237-residue chain is Sugar fermentation stimulation protein homolog (237 aa).

The protein belongs to the SfsA family.

The protein is Sugar fermentation stimulation protein homolog of Azorhizobium caulinodans (strain ATCC 43989 / DSM 5975 / JCM 20966 / LMG 6465 / NBRC 14845 / NCIMB 13405 / ORS 571).